We begin with the raw amino-acid sequence, 288 residues long: Cyclin-dependent kinase 2 homolog (288 aa).

Residues Tyr-4 to Phe-284 enclose the Protein kinase domain. ATP-binding positions include Ile-10–Val-18 and Lys-32. The residue at position 14 (Thr-14) is a Phosphothreonine. Residue Tyr-15 is modified to Phosphotyrosine. Residue Asp-125 is the Proton acceptor of the active site. Thr-158 carries the phosphothreonine modification.

This sequence belongs to the protein kinase superfamily. CMGC Ser/Thr protein kinase family. CDC2/CDKX subfamily. May form a complex composed of at least the catalytic subunit CRK2 and a cyclin. Mg(2+) is required as a cofactor.

It localises to the cytoplasm. The enzyme catalyses L-seryl-[protein] + ATP = O-phospho-L-seryl-[protein] + ADP + H(+). It carries out the reaction L-threonyl-[protein] + ATP = O-phospho-L-threonyl-[protein] + ADP + H(+). The catalysed reaction is [DNA-directed RNA polymerase] + ATP = phospho-[DNA-directed RNA polymerase] + ADP + H(+). Phosphorylation at Thr-14 or Tyr-15 inactivates the enzyme, while phosphorylation at Thr-158 activates it. Functionally, serine/threonine-protein kinase. Involved in the control of the cell cycle. Required for entry into S-phase and mitosis. Probable component of the kinase complex that phosphorylates the repetitive C-terminus of RNA polymerase II. This is Cyclin-dependent kinase 2 homolog from Plasmodium vivax.